Consider the following 147-residue polypeptide: Protein SOB FIVE-LIKE 2 (147 aa).

Residues 18–23 carry the SOFL-A motif; the sequence is SGWTMY. A disordered region spans residues 32 to 147; sequence HHSEVVYEEE…ASRVKVSKTK (116 aa). Residues 37–77 are compositionally biased toward acidic residues; that stretch reads VYEEEDDGFSVKEVDDDGDGDEDDDDDDDDDSSNNESDDSM. Residues 76-85 carry the SOFL-B motif; that stretch reads SMTSDASSWP. Residues 78-93 show a composition bias toward polar residues; that stretch reads TSDASSWPSTHQPPRS. Positions 96-106 are enriched in low complexity; sequence NHAAAKNSNAK. The span at 114 to 131 shows a compositional bias: basic and acidic residues; the sequence is NRVRDRFSDEGEESELKA.

It belongs to the SOFL plant protein family. In terms of tissue distribution, predominantly expressed in the vascular tissues of seedlings, developing leaves, flowers and siliques, but barely detectable in roots and stems.

It is found in the cytoplasm. Its subcellular location is the nucleus. Its function is as follows. Involved in cytokinin-mediated development. Together with SOFL2, triggers the endogenous content of specific bioactive cytokinins derived from the biosynthetic intermediates trans-zeatin riboside monophosphate (tZRMP) and N(6)-(Delta(2)-isopentenyl)adenosine monophosphate (iPRMP) such as N-glucosides trans-zeatin 7-glucoside (tZ7G), cis-zeatin 7-glucoside (cZ7G) and N(6)-(Delta(2)-isopentenyl)adenine 7-glucoside (iP7G). This is Protein SOB FIVE-LIKE 2 from Arabidopsis thaliana (Mouse-ear cress).